A 331-amino-acid chain; its full sequence is Transmembrane protein 59-like (331 aa).

The signal sequence occupies residues 1–21; the sequence is MAAVALPLLLLLASPATPTPA. Residues 15 to 62 form a disordered region; the sequence is PATPTPARDPFSPQLGDTQRCQQRCRQRHPGLPPAQPEPEGPSESPNN. Residues 45 to 54 are compositionally biased toward pro residues; that stretch reads GLPPAQPEPE. The N-linked (GlcNAc...) asparagine glycan is linked to N90. A helical transmembrane segment spans residues 258 to 278; sequence VLFCCLFLSVLIILWLSCCTL. The Microbody targeting signal signature appears at 329 to 331; that stretch reads TTL.

This sequence belongs to the TMEM59 family.

It localises to the golgi apparatus membrane. Functionally, modulates the O-glycosylation and complex N-glycosylation steps occurring during the Golgi maturation of APP. Inhibits APP transport to the cell surface and further shedding. The chain is Transmembrane protein 59-like (Tmem59l) from Rattus norvegicus (Rat).